The primary structure comprises 312 residues: MERFLRLGGLGGNLGTFGANPQDSNQVDTSETVYISSLALLKMLKHGRAGVPMEVMGLMLGEFVDDYTVNVIDVFAMPQSGTGVSVEAVDPVFQAKMLDMLKQTGRPEMVVGWYHSHPGFGCWLSGVDINTQQSFEALSDRAVAVVVDPIQSVKGKVVIDAFRTINPQSMALNQEPRQTTSNLGHLQKPSIQALIHGLNRHYYSIPIAYRTHDLEQKMLLNLNKLSWMDAVSVENYSKCGEQNKEHLKAMLKLAKNYKKALEDEKNMTDQELAIKNVGKMDPKRHIADEVSKMLNDNIVQSLAGMMATTSLQ.

One can recognise an MPN domain in the interval 33–168 (VYISSLALLK…IDAFRTINPQ (136 aa)). 3 residues coordinate Zn(2+): His-115, His-117, and Asp-128. Residues 115–128 (HSHPGFGCWLSGVD) carry the JAMM motif motif.

The protein belongs to the peptidase M67A family. PSMD14 subfamily. Component of the 19S regulatory cap of the 26S proteasome.

Functionally, metalloprotease component of the 26S proteasome that specifically cleaves 'Lys-63'-linked polyubiquitin chains. The 26S proteasome is involved in the ATP-dependent degradation of ubiquitinated proteins. The function of the 'Lys-63'-specific deubiquitination of the proteasome is unclear. This is 26S proteasome non-ATPase regulatory subunit 14 (rpn-11) from Caenorhabditis elegans.